The sequence spans 333 residues: Nucleoid-associated protein HAPS_0704 (333 aa).

It belongs to the YejK family.

The protein resides in the cytoplasm. It localises to the nucleoid. This is Nucleoid-associated protein HAPS_0704 from Glaesserella parasuis serovar 5 (strain SH0165) (Haemophilus parasuis).